Here is a 139-residue protein sequence, read N- to C-terminus: D-ribose pyranase (139 aa).

Catalysis depends on His20, which acts as the Proton donor. Substrate contacts are provided by residues Asp28, His106, and 128–130 (FAN).

This sequence belongs to the RbsD / FucU family. RbsD subfamily. Homodecamer.

The protein resides in the cytoplasm. The catalysed reaction is beta-D-ribopyranose = beta-D-ribofuranose. Its pathway is carbohydrate metabolism; D-ribose degradation; D-ribose 5-phosphate from beta-D-ribopyranose: step 1/2. Its function is as follows. Catalyzes the interconversion of beta-pyran and beta-furan forms of D-ribose. The polypeptide is D-ribose pyranase (Yersinia enterocolitica serotype O:8 / biotype 1B (strain NCTC 13174 / 8081)).